A 110-amino-acid chain; its full sequence is N(4)-acetylcytidine amidohydrolase (110 aa).

In terms of domain architecture, ASCH spans 6 to 93 (TFFERFEQDI…IQEIYPGLEQ (88 aa)). The active-site Proton acceptor is the Lys20. The active-site Nucleophile is Thr23. Glu73 (proton donor) is an active-site residue.

It belongs to the N(4)-acetylcytidine amidohydrolase family.

It carries out the reaction N(4)-acetylcytidine + H2O = cytidine + acetate + H(+). It catalyses the reaction N(4)-acetyl-2'-deoxycytidine + H2O = 2'-deoxycytidine + acetate + H(+). The catalysed reaction is N(4)-acetylcytosine + H2O = cytosine + acetate + H(+). In terms of biological role, catalyzes the hydrolysis of N(4)-acetylcytidine (ac4C). This Shewanella sp. (strain ANA-3) protein is N(4)-acetylcytidine amidohydrolase.